Consider the following 259-residue polypeptide: Type III pantothenate kinase (259 aa).

Aspartate 9–lysine 16 is an ATP binding site. Residues tyrosine 93 and glycine 100–arginine 103 contribute to the substrate site. Catalysis depends on aspartate 102, which acts as the Proton acceptor. ATP is bound at residue threonine 126. A substrate-binding site is contributed by threonine 190.

This sequence belongs to the type III pantothenate kinase family. Homodimer. NH4(+) serves as cofactor. The cofactor is K(+).

Its subcellular location is the cytoplasm. The catalysed reaction is (R)-pantothenate + ATP = (R)-4'-phosphopantothenate + ADP + H(+). The protein operates within cofactor biosynthesis; coenzyme A biosynthesis; CoA from (R)-pantothenate: step 1/5. Catalyzes the phosphorylation of pantothenate (Pan), the first step in CoA biosynthesis. This Burkholderia thailandensis (strain ATCC 700388 / DSM 13276 / CCUG 48851 / CIP 106301 / E264) protein is Type III pantothenate kinase.